The primary structure comprises 419 residues: Tyrosine--tRNA ligase 2 (419 aa).

Y34 lines the L-tyrosine pocket. The 'HIGH' region signature appears at 39-48 (PTGDSMHIGH). Y168 and Q172 together coordinate L-tyrosine. Positions 230–234 (KFGKS) match the 'KMSKS' region motif. Residue K233 participates in ATP binding. Residues 352–418 (KNIVEWLVDL…GKKNYSLVKL (67 aa)) form the S4 RNA-binding domain.

This sequence belongs to the class-I aminoacyl-tRNA synthetase family. TyrS type 1 subfamily. As to quaternary structure, homodimer.

The protein localises to the cytoplasm. It catalyses the reaction tRNA(Tyr) + L-tyrosine + ATP = L-tyrosyl-tRNA(Tyr) + AMP + diphosphate + H(+). Its function is as follows. Catalyzes the attachment of tyrosine to tRNA(Tyr) in a two-step reaction: tyrosine is first activated by ATP to form Tyr-AMP and then transferred to the acceptor end of tRNA(Tyr). The protein is Tyrosine--tRNA ligase 2 of Bacillus anthracis.